The sequence spans 64 residues: Alpha-conotoxin-like Lp1.7 (64 aa).

Positions Met-1–Ser-21 are cleaved as a signal peptide. Positions Phe-22–Arg-41 are excised as a propeptide. 2 disulfide bridges follow: Cys-47–Cys-53 and Cys-48–Cys-61. Positions Asp-49–Pro-51 are lacks the Ser-Xaa-Pro motif that is crucial for potent interaction with nAChR.

Belongs to the conotoxin A superfamily. As to expression, expressed by the venom duct.

It is found in the secreted. Functionally, alpha-conotoxins act on postsynaptic membranes, they bind to the nicotinic acetylcholine receptors (nAChR) and thus inhibit them. Has possibly a distinct nAChR binding mode from other alpha-conotoxins, due to a different three residue motif (lacks the Ser-Xaa-Pro motif). The protein is Alpha-conotoxin-like Lp1.7 of Conus leopardus (Leopard cone).